A 221-amino-acid polypeptide reads, in one-letter code: Thiamine-phosphate synthase (221 aa).

4-amino-2-methyl-5-(diphosphooxymethyl)pyrimidine is bound by residues 47 to 51 (QYREK) and Asn79. Mg(2+) contacts are provided by Asp80 and Asp99. Thr118 lines the 4-amino-2-methyl-5-(diphosphooxymethyl)pyrimidine pocket. Position 144–146 (144–146 (SFT)) interacts with 2-[(2R,5Z)-2-carboxy-4-methylthiazol-5(2H)-ylidene]ethyl phosphate. Lys147 is a 4-amino-2-methyl-5-(diphosphooxymethyl)pyrimidine binding site. 2-[(2R,5Z)-2-carboxy-4-methylthiazol-5(2H)-ylidene]ethyl phosphate contacts are provided by residues Gly175 and 195 to 196 (VT).

The protein belongs to the thiamine-phosphate synthase family. Requires Mg(2+) as cofactor.

It catalyses the reaction 2-[(2R,5Z)-2-carboxy-4-methylthiazol-5(2H)-ylidene]ethyl phosphate + 4-amino-2-methyl-5-(diphosphooxymethyl)pyrimidine + 2 H(+) = thiamine phosphate + CO2 + diphosphate. The catalysed reaction is 2-(2-carboxy-4-methylthiazol-5-yl)ethyl phosphate + 4-amino-2-methyl-5-(diphosphooxymethyl)pyrimidine + 2 H(+) = thiamine phosphate + CO2 + diphosphate. The enzyme catalyses 4-methyl-5-(2-phosphooxyethyl)-thiazole + 4-amino-2-methyl-5-(diphosphooxymethyl)pyrimidine + H(+) = thiamine phosphate + diphosphate. It functions in the pathway cofactor biosynthesis; thiamine diphosphate biosynthesis; thiamine phosphate from 4-amino-2-methyl-5-diphosphomethylpyrimidine and 4-methyl-5-(2-phosphoethyl)-thiazole: step 1/1. In terms of biological role, condenses 4-methyl-5-(beta-hydroxyethyl)thiazole monophosphate (THZ-P) and 2-methyl-4-amino-5-hydroxymethyl pyrimidine pyrophosphate (HMP-PP) to form thiamine monophosphate (TMP). The polypeptide is Thiamine-phosphate synthase (Caldicellulosiruptor saccharolyticus (strain ATCC 43494 / DSM 8903 / Tp8T 6331)).